A 75-amino-acid polypeptide reads, in one-letter code: Sec-independent protein translocase protein TatA (75 aa).

The helical transmembrane segment at 1 to 21 threads the bilayer; sequence MGGISIWQLLIIVAIIVLLFG. Residues 50–75 form a disordered region; it reads DAEFKSLNKDESATAGSEKVKDKEQA.

Belongs to the TatA/E family. The Tat system comprises two distinct complexes: a TatABC complex, containing multiple copies of TatA, TatB and TatC subunits, and a separate TatA complex, containing only TatA subunits. Substrates initially bind to the TatABC complex, which probably triggers association of the separate TatA complex to form the active translocon.

The protein localises to the cell inner membrane. Functionally, part of the twin-arginine translocation (Tat) system that transports large folded proteins containing a characteristic twin-arginine motif in their signal peptide across membranes. TatA could form the protein-conducting channel of the Tat system. In Mannheimia succiniciproducens (strain KCTC 0769BP / MBEL55E), this protein is Sec-independent protein translocase protein TatA.